A 124-amino-acid chain; its full sequence is Putative membrane protein insertion efficiency factor (124 aa).

This sequence belongs to the UPF0161 family.

Its subcellular location is the cell inner membrane. Its function is as follows. Could be involved in insertion of integral membrane proteins into the membrane. In Psychrobacter arcticus (strain DSM 17307 / VKM B-2377 / 273-4), this protein is Putative membrane protein insertion efficiency factor.